A 1446-amino-acid polypeptide reads, in one-letter code: MARRPILLGDQLVLEEDSDETYVPSEQEILDFARVIGIDPIKEPELMWLAREGIEAPLPKGWKPCQNITGDLYYFNFDTGQSIWDHPCDEHYRKLVIQERERWSAPGAIKKKDKKKKKEKKNKKDKETSKSPLVLGSPLALVQAPLWGLAPLRGLGDAPPSALRGSQSVSLGSSADSGHLGEPTLPPQGLKAAACAKGLLASVHEGKNALSLLTLGEETNEEDEEESDNQSVRSSSELLKNLHLDLGALGGNFEYEESPRTSQPDKKDVSLDSDADRPPTPGKLFSQGADSSVASANGSKSQGRGASPWNPQKENENSDPKASSSQMAPELDPGGDQPSRASKKQQAEDPVQAGKEGECRRESAAKEPKEASALENTSDVSEESEIHGHLKDARHSGSEASGPKSFLGLDLGFRSRISEHLLDGDTLSPVLGGGHWEAQGLDQEEQDDSKSSIAEPQSKHTQGSEREHLQSSLHSQATEEGPLQTLEGQPEWKEAEGPGKDSVASPAPLSLLQREQVLSPPASPERAEEKHSQAEELGLEQPEAEETEEKVAVCPSSPVSPEVQTAEPAAPQKLFSEAILKGMELEEDQRLLLEFQKEKPQQLEERLWEEEEEEVCQLYQQKEKSLSLLKAQLQKATAEEKEKEEETKIREEESRRLVCLRAQVQSRTEAFENQIRTEQQAALQRLREEAETLQKAERASLEQKSRRALEQLREQLEAEERSAQAALRAEKEAEKEAALLQLREQLEGERKEAVAGLEKKHSAELEQLCSSLEAKHQEVISSLQKKIEGAQQKEEAQLQESLGWAEQRAHQKVHQVTEYEQELSSLLRDKRQEVEREHERKMDKMKEEHWQEMADARERYEAEERKQRADLLGHLTGELERLRRAHERELESMRQEQDQQLEDLRRRHRDHERKLQDLEVELSSRTKDVKARLAQLNVQEENIRKEKQLLLDAQRQAALEREEATATHQHLEEAKKEHTHLLETKQQLRRTIDDLRVRRVELESQVDLLQAQSQRLQKHLSSLEAEVQRKQDVLKEMAAEMNASPHPEPGLHIEDLRKSLDTNKNQEVSSSLSLSKEEIDLSMESVRQFLSAEGVAVRNAKEFLVRQTRSMRRRQTALKAAQQHWRHELASAQEVDEDLPGTEVLGNMRKNLNEETRHLDEMKSAMRKGHDLLKKKEEKLIQLESSLQEEVSDEDTLKGSSIKKVTFDLSDMDDLSSESLESSPVLHITPTPTSADPNKIHYLSSSLQRISSELNGVLNVLGSLNSQPPPQGLGSQPPPPLFTSSLRSSKNVLDPAYSSQAKLSSLSSITPMSTQWAWDPGQGTKLTSSSSSQTVDDFLLEKWRKYFPSGIPLLSGSPPPPENKLGYVSVSEQLHFLQRSHPRVPRTDGVSIQSLIDSNRKWLEHFRNDPKVQLFSSAPKATTTSNLSNLLQLGLDENNRLNVFHY.

Residues 1 to 195 (MARRPILLGD…PPQGLKAAAC (195 aa)) form an interaction with ATRIP region. Residues 56–89 (APLPKGWKPCQNITGDLYYFNFDTGQSIWDHPCD) form the WW domain. Disordered regions lie at residues 106–132 (PGAIKKKDKKKKKEKKNKKDKETSKSP) and 159–185 (PPSALRGSQSVSLGSSADSGHLGEPTL). The segment covering 109-121 (IKKKDKKKKKEKK) has biased composition (basic residues). The segment covering 164–176 (RGSQSVSLGSSAD) has biased composition (polar residues). Position 202 is a phosphoserine (Ser202). Disordered stretches follow at residues 217–238 (EETNEEDEEESDNQSVRSSSEL), 250–408 (GGNF…SFLG), 424–570 (GDTL…EPAA), and 830–849 (KRQEVEREHERKMDKMKEEH). Positions 218–228 (ETNEEDEEESD) are enriched in acidic residues. Residues 257–277 (ESPRTSQPDKKDVSLDSDADR) are compositionally biased toward basic and acidic residues. Polar residues predominate over residues 288 to 312 (GADSSVASANGSKSQGRGASPWNPQ). Basic and acidic residues-rich tracts occupy residues 355–372 (KEGECRRESAAKEPKEAS) and 384–397 (SEIHGHLKDARHSG). Positions 451-461 (SSIAEPQSKHT) are enriched in polar residues. 2 stretches are compositionally biased toward basic and acidic residues: residues 490-499 (PEWKEAEGPG) and 525-534 (ERAEEKHSQA). Residues 1143–1197 (EVLGNMRKNLNEETRHLDEMKSAMRKGHDLLKKKEEKLIQLESSLQEEVSDEDTL) adopt a coiled-coil conformation. The segment at 1261–1287 (LGSLNSQPPPQGLGSQPPPPLFTSSLR) is disordered. Positions 1267-1281 (QPPPQGLGSQPPPPL) are enriched in pro residues. Ser1369 and Ser1371 each carry phosphoserine.

As to quaternary structure, interacts (via N-terminus) with ATRIP. Interacts with ATM, ATR and MDC1. Interacts with XPA (via N-terminus) upon UV irradiation. Interacts with CEP83, CCDC92, TTBK2, DVL3, NPHP3 and weakly with NPHP4. Interacts with DZIP1.

It localises to the cytoplasm. The protein resides in the cytoskeleton. The protein localises to the microtubule organizing center. Its subcellular location is the centrosome. It is found in the centriole. It localises to the nucleus. Its function is as follows. Plays a role in microtubule organization and/or maintenance for the formation of primary cilia (PC), a microtubule-based structure that protrudes from the surface of epithelial cells. Plays a critical role in G2/M checkpoint and nuclear divisions. A key player in the DNA damage-activated ATR/ATM signaling cascade since it is required for the proper phosphorylation of H2AX, RPA, CHEK2 and CHEK1. Plays a critical role in chromosome segregation, acting as a mediator required for the maintenance of genomic stability through modulation of MDC1, RPA and CHEK1. This Mus musculus (Mouse) protein is Centrosomal protein of 164 kDa.